The following is a 318-amino-acid chain: Polyprenal reductase (318 aa).

The Cytoplasmic portion of the chain corresponds to 1–19 (MAPWAAAQLWALNPLRALW). Residues 20–40 (LTLAAAFLLTLLLQLVPPGLL) form a helical membrane-spanning segment. Topologically, residues 41-80 (PGCALFQDLIRYGKTKREGQSRPAVCRVFDVPKRYFSHFY) are lumenal. The helical transmembrane segment at 81-101 (IISALWNGFLLWHLTQSVFLG) threads the bilayer. Over 102–119 (VPFPNWLHGLLRILGASQ) the chain is Cytoplasmic. Residues 120 to 140 (FQGGELALSAFLVLVFLWLHS) form a helical membrane-spanning segment. At 141 to 156 (LRRLFECFYVSVFSNT) the chain is on the lumenal side. Residues 157-177 (VIHIVQYCFGLVYYVLTGLTV) traverse the membrane as a helical segment. Over 178–194 (LSQVPMDGRNAYVIGKN) the chain is Cytoplasmic. The helical transmembrane segment at 195 to 215 (LLMQARWFHILGMLMFIWSSV) threads the bilayer. The Lumenal segment spans residues 216–265 (HQYKCHVILGNLRKNKAGVVIHCNHRIPFGDWFEYVSSPNYLAELMIYIS). The chain crosses the membrane as a helical span at residues 266–286 (MAVTFGFHNLTWWLVVTYVFF). At 287-318 (SQALSAFLSHKFYKSKFVSYPKHRKAFLPFLF) the chain is on the cytoplasmic side.

Belongs to the steroid 5-alpha reductase family. Polyprenal reductase subfamily.

The protein resides in the endoplasmic reticulum membrane. The enzyme catalyses a di-trans,poly-cis-dolichal + NADP(+) = a di-trans,poly-cis-polyprenal + NADPH + H(+). The catalysed reaction is a 3-oxo-5alpha-steroid + NADP(+) = a 3-oxo-Delta(4)-steroid + NADPH + H(+). It catalyses the reaction androst-4-ene-3,17-dione + NADPH + H(+) = 5alpha-androstan-3,17-dione + NADP(+). It carries out the reaction 17beta-hydroxy-5alpha-androstan-3-one + NADP(+) = testosterone + NADPH + H(+). The protein operates within protein modification; protein glycosylation. In terms of biological role, plays a key role in early steps of protein N-linked glycosylation by being involved in the conversion of polyprenol into dolichol. Acts as a polyprenal reductase that mediates the reduction of polyprenal into dolichal in a NADP-dependent mechanism. Dolichols are required for the synthesis of dolichol-linked monosaccharides and the oligosaccharide precursor used for N-glycosylation. Also able to convert testosterone (T) into 5-alpha-dihydrotestosterone (DHT). The chain is Polyprenal reductase (SRD5A3) from Ailuropoda melanoleuca (Giant panda).